The following is a 119-amino-acid chain: Putative ankyrin repeat domain-containing protein 26-like 1 (119 aa).

The stretch at Glu-15–Lys-112 forms a coiled coil.

In Homo sapiens (Human), this protein is Putative ankyrin repeat domain-containing protein 26-like 1 (ANKRD36BP1).